The following is a 341-amino-acid chain: Ribosomal RNA small subunit methyltransferase H (341 aa).

Residues 47-49 (GGY), aspartate 64, phenylalanine 97, aspartate 109, and glutamine 116 contribute to the S-adenosyl-L-methionine site.

This sequence belongs to the methyltransferase superfamily. RsmH family.

The protein localises to the cytoplasm. The catalysed reaction is cytidine(1402) in 16S rRNA + S-adenosyl-L-methionine = N(4)-methylcytidine(1402) in 16S rRNA + S-adenosyl-L-homocysteine + H(+). Its function is as follows. Specifically methylates the N4 position of cytidine in position 1402 (C1402) of 16S rRNA. The protein is Ribosomal RNA small subunit methyltransferase H of Allorhizobium ampelinum (strain ATCC BAA-846 / DSM 112012 / S4) (Agrobacterium vitis (strain S4)).